The sequence spans 907 residues: Protein translocase subunit SecA (907 aa).

Residues glutamine 87, 105–109, and aspartate 512 each bind ATP; that span reads GEGKT. 4 residues coordinate Zn(2+): cysteine 891, cysteine 893, cysteine 902, and histidine 903.

This sequence belongs to the SecA family. In terms of assembly, monomer and homodimer. Part of the essential Sec protein translocation apparatus which comprises SecA, SecYEG and auxiliary proteins SecDF-YajC and YidC. Requires Zn(2+) as cofactor.

It is found in the cell inner membrane. The protein resides in the cytoplasm. It carries out the reaction ATP + H2O + cellular proteinSide 1 = ADP + phosphate + cellular proteinSide 2.. In terms of biological role, part of the Sec protein translocase complex. Interacts with the SecYEG preprotein conducting channel. Has a central role in coupling the hydrolysis of ATP to the transfer of proteins into and across the cell membrane, serving both as a receptor for the preprotein-SecB complex and as an ATP-driven molecular motor driving the stepwise translocation of polypeptide chains across the membrane. This is Protein translocase subunit SecA from Shewanella loihica (strain ATCC BAA-1088 / PV-4).